A 433-amino-acid polypeptide reads, in one-letter code: Serine--tRNA ligase (433 aa).

Residue 235–237 (TSE) participates in L-serine binding. 266–268 (RSE) serves as a coordination point for ATP. Glu289 contacts L-serine. An ATP-binding site is contributed by 353–356 (EISS). An L-serine-binding site is contributed by Ser388.

The protein belongs to the class-II aminoacyl-tRNA synthetase family. Type-1 seryl-tRNA synthetase subfamily. As to quaternary structure, homodimer. The tRNA molecule binds across the dimer.

The protein localises to the cytoplasm. The catalysed reaction is tRNA(Ser) + L-serine + ATP = L-seryl-tRNA(Ser) + AMP + diphosphate + H(+). The enzyme catalyses tRNA(Sec) + L-serine + ATP = L-seryl-tRNA(Sec) + AMP + diphosphate + H(+). It participates in aminoacyl-tRNA biosynthesis; selenocysteinyl-tRNA(Sec) biosynthesis; L-seryl-tRNA(Sec) from L-serine and tRNA(Sec): step 1/1. Functionally, catalyzes the attachment of serine to tRNA(Ser). Is also able to aminoacylate tRNA(Sec) with serine, to form the misacylated tRNA L-seryl-tRNA(Sec), which will be further converted into selenocysteinyl-tRNA(Sec). The polypeptide is Serine--tRNA ligase (Burkholderia cenocepacia (strain HI2424)).